A 219-amino-acid chain; its full sequence is Inner membrane protein YghB (219 aa).

Over 1 to 17 (MAVIQDIIAALWQHDFA) the chain is Cytoplasmic. Residues 18–38 (ALANPHVVSVVYFVMFATLFL) traverse the membrane as a helical segment. Over 39-67 (ENGLLPASFLPGDSLLLLAGALIAQDVMH) the chain is Periplasmic. Residues 68–88 (FLPTIGILTAAASLGCWLSYI) traverse the membrane as a helical segment. At 89-160 (QGRWLGNTRT…RRFQFFNWLS (72 aa)) the chain is on the cytoplasmic side. A helical transmembrane segment spans residues 161-181 (GLLWVTVVTSFGYALSMIPFV). Residues 182–191 (KRHEDQVMTF) are Periplasmic-facing. Residues 192–212 (LMILPVALLVAGLLGTLVVVI) traverse the membrane as a helical segment. At 213 to 219 (KKKYCNA) the chain is on the cytoplasmic side.

The protein belongs to the DedA family.

Its subcellular location is the cell inner membrane. The chain is Inner membrane protein YghB (yghB) from Salmonella typhimurium (strain LT2 / SGSC1412 / ATCC 700720).